The following is a 396-amino-acid chain: 1-deoxy-D-xylulose 5-phosphate reductoisomerase (396 aa).

NADPH contacts are provided by Thr-10, Gly-11, Ser-12, Ile-13, Gly-36, Lys-37, Asn-38, and Asn-124. Residue Lys-125 participates in 1-deoxy-D-xylulose 5-phosphate binding. Glu-126 is an NADPH binding site. Asp-150 is a binding site for Mn(2+). 1-deoxy-D-xylulose 5-phosphate contacts are provided by Ser-151, Glu-152, Ser-186, and His-209. Glu-152 contacts Mn(2+). Gly-215 lines the NADPH pocket. 1-deoxy-D-xylulose 5-phosphate-binding residues include Ser-222, Asn-227, Lys-228, and Glu-231. A Mn(2+)-binding site is contributed by Glu-231.

This sequence belongs to the DXR family. Mg(2+) serves as cofactor. Requires Mn(2+) as cofactor.

It catalyses the reaction 2-C-methyl-D-erythritol 4-phosphate + NADP(+) = 1-deoxy-D-xylulose 5-phosphate + NADPH + H(+). The protein operates within isoprenoid biosynthesis; isopentenyl diphosphate biosynthesis via DXP pathway; isopentenyl diphosphate from 1-deoxy-D-xylulose 5-phosphate: step 1/6. Catalyzes the NADPH-dependent rearrangement and reduction of 1-deoxy-D-xylulose-5-phosphate (DXP) to 2-C-methyl-D-erythritol 4-phosphate (MEP). The protein is 1-deoxy-D-xylulose 5-phosphate reductoisomerase of Haemophilus ducreyi (strain 35000HP / ATCC 700724).